The following is a 392-amino-acid chain: Putative non-inhibitory serpin-10 (392 aa).

An RCL region spans residues 333–357 (GTTAVEATYSCCSPTYSGPESPKPR).

Belongs to the serpin family.

The polypeptide is Putative non-inhibitory serpin-10 (Oryza sativa subsp. japonica (Rice)).